A 269-amino-acid polypeptide reads, in one-letter code: Cytolethal distending toxin subunit B (269 aa).

Positions 1–18 (MKKYIISLIVFLSFYAQA) are cleaved as a signal peptide. The short motif at 195–210 (REPADLEMNLTVPVRR) is the Nuclear localization signal element.

In terms of assembly, heterotrimer of 3 subunits, CdtA, CdtB and CdtC.

It is found in the secreted. Functionally, part of the tripartite complex that is required for the CDT activity. CdtB exhibits a DNA-nicking endonuclease activity, and very probably causes DNA damage in intoxicated cells. This damage induces G2/M cell cycle arrest, chromatin fragmentation, cell distention and nucleus enlargement. The protein is Cytolethal distending toxin subunit B (cdtB) of Escherichia coli.